Here is a 238-residue protein sequence, read N- to C-terminus: Putative ABC transporter ATP-binding protein AF_1841 (238 aa).

The 231-residue stretch at 8-238 (IEADSVSYDY…EELLEKAGVI (231 aa)) folds into the ABC transporter domain. 41 to 48 (GANGSGKS) lines the ATP pocket.

The protein belongs to the ABC transporter superfamily.

It localises to the cell membrane. Its function is as follows. Probably part of an ABC transporter complex. Responsible for energy coupling to the transport system. The sequence is that of Putative ABC transporter ATP-binding protein AF_1841 from Archaeoglobus fulgidus (strain ATCC 49558 / DSM 4304 / JCM 9628 / NBRC 100126 / VC-16).